The primary structure comprises 157 residues: Transcription elongation factor GreA (157 aa).

A coiled-coil region spans residues 13–75; it reads RARLEAELEE…EIKSILARAQ (63 aa).

The protein belongs to the GreA/GreB family.

In terms of biological role, necessary for efficient RNA polymerase transcription elongation past template-encoded arresting sites. The arresting sites in DNA have the property of trapping a certain fraction of elongating RNA polymerases that pass through, resulting in locked ternary complexes. Cleavage of the nascent transcript by cleavage factors such as GreA or GreB allows the resumption of elongation from the new 3'terminus. GreA releases sequences of 2 to 3 nucleotides. This chain is Transcription elongation factor GreA, found in Roseiflexus castenholzii (strain DSM 13941 / HLO8).